The primary structure comprises 335 residues: Glucan endo-1,3-beta-glucosidase, acidic isoform (335 aa).

An N-terminal signal peptide occupies residues 1–29 (MARQGVIASMHALALLLGAFAAIPTGVQS). Catalysis depends on Glu122, which acts as the Proton donor. The active-site Nucleophile is Glu259.

Belongs to the glycosyl hydrolase 17 family. In terms of tissue distribution, accumulates in aleurone layers. Much lower levels are found in the embryo, and none in starchy endosperm.

The protein localises to the secreted. Its subcellular location is the extracellular space. It carries out the reaction Hydrolysis of (1-&gt;3)-beta-D-glucosidic linkages in (1-&gt;3)-beta-D-glucans.. Functionally, is thought to be an important plant defense-related product against fungal pathogens. In Zea mays (Maize), this protein is Glucan endo-1,3-beta-glucosidase, acidic isoform.